The primary structure comprises 461 residues: tRNA modification GTPase MnmE (461 aa).

Arg23, Glu84, and Lys123 together coordinate (6S)-5-formyl-5,6,7,8-tetrahydrofolate. Residues 219–382 form the TrmE-type G domain; the sequence is GVQVVIGGRP…LLDHLTDTVA (164 aa). GTP is bound by residues 229 to 234, 248 to 254, 273 to 276, and 337 to 340; these read NAGKST, SETPGTT, DTAG, and NKAD. Residues Ser233 and Thr254 each contribute to the Mg(2+) site. Lys461 contributes to the (6S)-5-formyl-5,6,7,8-tetrahydrofolate binding site.

It belongs to the TRAFAC class TrmE-Era-EngA-EngB-Septin-like GTPase superfamily. TrmE GTPase family. In terms of assembly, homodimer. Heterotetramer of two MnmE and two MnmG subunits. It depends on K(+) as a cofactor.

It is found in the cytoplasm. Functionally, exhibits a very high intrinsic GTPase hydrolysis rate. Involved in the addition of a carboxymethylaminomethyl (cmnm) group at the wobble position (U34) of certain tRNAs, forming tRNA-cmnm(5)s(2)U34. The polypeptide is tRNA modification GTPase MnmE (Salinibacter ruber (strain DSM 13855 / M31)).